The chain runs to 276 residues: NH(3)-dependent NAD(+) synthetase (276 aa).

43–50 (GISGGVDS) is a binding site for ATP. Asp49 contributes to the Mg(2+) binding site. Arg146 is a deamido-NAD(+) binding site. Thr166 provides a ligand contact to ATP. Glu171 is a binding site for Mg(2+). Deamido-NAD(+) contacts are provided by Lys179 and Asp186. ATP contacts are provided by Lys195 and Thr217. 266 to 267 (HK) contributes to the deamido-NAD(+) binding site.

It belongs to the NAD synthetase family. In terms of assembly, homodimer.

It catalyses the reaction deamido-NAD(+) + NH4(+) + ATP = AMP + diphosphate + NAD(+) + H(+). It participates in cofactor biosynthesis; NAD(+) biosynthesis; NAD(+) from deamido-NAD(+) (ammonia route): step 1/1. Catalyzes the ATP-dependent amidation of deamido-NAD to form NAD. Uses ammonia as a nitrogen source. The chain is NH(3)-dependent NAD(+) synthetase from Shewanella piezotolerans (strain WP3 / JCM 13877).